The primary structure comprises 236 residues: Small ribosomal subunit protein uS2c (236 aa).

This sequence belongs to the universal ribosomal protein uS2 family.

It is found in the plastid. The protein resides in the chloroplast. The polypeptide is Small ribosomal subunit protein uS2c (rps2) (Zea mays (Maize)).